Consider the following 513-residue polypeptide: Na(+)/H(+) antiporter NhaB (513 aa).

Helical transmembrane passes span 21-41 (ITIV…SPFI), 88-108 (IIAN…IYFM), 119-139 (LLLS…SAAF), 143-163 (FLDA…FYGV), 208-228 (VGTA…LIIA), 247-267 (LPVL…GVFG), 303-323 (ALIG…VGII), 357-377 (LVVF…APII), 389-409 (LALF…VFVA), 447-467 (ATPN…APLI), and 477-497 (MALP…EYIL).

The protein belongs to the NhaB Na(+)/H(+) (TC 2.A.34) antiporter family.

The protein resides in the cell inner membrane. It carries out the reaction 2 Na(+)(in) + 3 H(+)(out) = 2 Na(+)(out) + 3 H(+)(in). In terms of biological role, na(+)/H(+) antiporter that extrudes sodium in exchange for external protons. This chain is Na(+)/H(+) antiporter NhaB, found in Pasteurella multocida (strain Pm70).